The primary structure comprises 86 residues: MVRVMVVIRIFGTGCPKCNQTYENVKKAVEELGIDAEIVKVTDVNEIAEWVFVTPGVAFDDVIVFEGKIPSVEEIKEELKSYLEGK.

Active-site nucleophile residues include Cys-15 and Cys-18. Residues Cys-15 and Cys-18 are joined by a disulfide bond.

Belongs to the glutaredoxin family.

Functionally, does not function as a glutathione-disulfide oxidoreductase in the presence of glutathione and glutathione reductase. Has low thioredoxin activity in vitro. In Methanocaldococcus jannaschii (strain ATCC 43067 / DSM 2661 / JAL-1 / JCM 10045 / NBRC 100440) (Methanococcus jannaschii), this protein is Thioredoxin.